The sequence spans 160 residues: Large ribosomal subunit protein bL9 (160 aa).

This sequence belongs to the bacterial ribosomal protein bL9 family.

In terms of biological role, binds to the 23S rRNA. In Neorickettsia sennetsu (strain ATCC VR-367 / Miyayama) (Ehrlichia sennetsu), this protein is Large ribosomal subunit protein bL9.